Consider the following 234-residue polypeptide: Enolase-phosphatase E1 (234 aa).

2 residues coordinate Mg(2+): D10 and E12. Residues 125–126 and K162 contribute to the substrate site; that span reads SS. A Mg(2+)-binding site is contributed by D188.

This sequence belongs to the HAD-like hydrolase superfamily. MasA/MtnC family. In terms of assembly, monomer. The cofactor is Mg(2+).

It localises to the cytoplasm. Its subcellular location is the nucleus. The catalysed reaction is 5-methylsulfanyl-2,3-dioxopentyl phosphate + H2O = 1,2-dihydroxy-5-(methylsulfanyl)pent-1-en-3-one + phosphate. Its pathway is amino-acid biosynthesis; L-methionine biosynthesis via salvage pathway; L-methionine from S-methyl-5-thio-alpha-D-ribose 1-phosphate: step 3/6. It participates in amino-acid biosynthesis; L-methionine biosynthesis via salvage pathway; L-methionine from S-methyl-5-thio-alpha-D-ribose 1-phosphate: step 4/6. Bifunctional enzyme that catalyzes the enolization of 2,3-diketo-5-methylthiopentyl-1-phosphate (DK-MTP-1-P) into the intermediate 2-hydroxy-3-keto-5-methylthiopentenyl-1-phosphate (HK-MTPenyl-1-P), which is then dephosphorylated to form the acireductone 1,2-dihydroxy-3-keto-5-methylthiopentene (DHK-MTPene). The polypeptide is Enolase-phosphatase E1 (utr4) (Neurospora crassa (strain ATCC 24698 / 74-OR23-1A / CBS 708.71 / DSM 1257 / FGSC 987)).